The chain runs to 544 residues: Chaperonin GroEL (544 aa).

ATP-binding positions include 30 to 33, Lys51, 87 to 91, Gly415, 478 to 480, and Asp494; these read TLGP, DGTTT, and DVA. The interval 524–544 is disordered; the sequence is PEKEKKPATPAGAGGMGDMEY. A compositionally biased stretch (gly residues) spans 535–544; that stretch reads GAGGMGDMEY.

The protein belongs to the chaperonin (HSP60) family. In terms of assembly, forms a cylinder of 14 subunits composed of two heptameric rings stacked back-to-back. Interacts with the co-chaperonin GroES.

The protein localises to the cytoplasm. The enzyme catalyses ATP + H2O + a folded polypeptide = ADP + phosphate + an unfolded polypeptide.. Functionally, together with its co-chaperonin GroES, plays an essential role in assisting protein folding. The GroEL-GroES system forms a nano-cage that allows encapsulation of the non-native substrate proteins and provides a physical environment optimized to promote and accelerate protein folding. In Methylacidiphilum infernorum (isolate V4) (Methylokorus infernorum (strain V4)), this protein is Chaperonin GroEL.